The primary structure comprises 928 residues: ATP-dependent DNA helicase PIF5 (928 aa).

The transit peptide at 1-49 (MLSRLSAVWRPSRVALRIQRVDFTTCGNRLNRSTQPNEPPLVSGIAARS) directs the protein to the mitochondrion. 2 disordered regions span residues 29 to 141 (RLNR…DVAI) and 176 to 231 (LRAK…FSDA). Residues 52 to 61 (AKAEPVEKRG) show a composition bias toward basic and acidic residues. Residue 264–271 (GGAGSGKS) coordinates ATP. Disordered regions lie at residues 389–421 (PIPP…APSK), 481–513 (KSSA…AAAE), 545–572 (IYPS…EDTM), and 585–607 (STHE…SQPW). Residues 550–566 (NDGSSQQTGSSNGANSV) are compositionally biased toward polar residues. The DNA-binding element occupies 858–877 (QAYVALSRSTRLDNIRLLDF). Residues 898–928 (EELDNEIEDDGTEGDEEALEGDGEYEGEVEE) form a disordered region.

It belongs to the helicase family. PIF1 subfamily. In terms of assembly, monomer. Mg(2+) is required as a cofactor.

It is found in the mitochondrion. It catalyses the reaction Couples ATP hydrolysis with the unwinding of duplex DNA at the replication fork by translocating in the 5'-3' direction. This creates two antiparallel DNA single strands (ssDNA). The leading ssDNA polymer is the template for DNA polymerase III holoenzyme which synthesizes a continuous strand.. The enzyme catalyses ATP + H2O = ADP + phosphate + H(+). Functionally, DNA-dependent ATPase and 5'-3' DNA helicase required for the maintenance of mitochondrial (kinetoplast) genome stability. Involved in processing of minicircle Okazaki fragments. The chain is ATP-dependent DNA helicase PIF5 from Trypanosoma brucei brucei (strain 927/4 GUTat10.1).